The following is a 442-amino-acid chain: Serine--tRNA ligase (442 aa).

249–251 (TSE) lines the L-serine pocket. 280–282 (RSE) provides a ligand contact to ATP. Glu303 contributes to the L-serine binding site. 367-370 (EISS) contacts ATP. L-serine is bound at residue Ser402.

The protein belongs to the class-II aminoacyl-tRNA synthetase family. Type-1 seryl-tRNA synthetase subfamily. In terms of assembly, homodimer. The tRNA molecule binds across the dimer.

Its subcellular location is the cytoplasm. The enzyme catalyses tRNA(Ser) + L-serine + ATP = L-seryl-tRNA(Ser) + AMP + diphosphate + H(+). It carries out the reaction tRNA(Sec) + L-serine + ATP = L-seryl-tRNA(Sec) + AMP + diphosphate + H(+). It functions in the pathway aminoacyl-tRNA biosynthesis; selenocysteinyl-tRNA(Sec) biosynthesis; L-seryl-tRNA(Sec) from L-serine and tRNA(Sec): step 1/1. Catalyzes the attachment of serine to tRNA(Ser). Is also able to aminoacylate tRNA(Sec) with serine, to form the misacylated tRNA L-seryl-tRNA(Sec), which will be further converted into selenocysteinyl-tRNA(Sec). In Acidovorax sp. (strain JS42), this protein is Serine--tRNA ligase.